The chain runs to 286 residues: Tryptophan 2,3-dioxygenase (286 aa).

Substrate contacts are provided by residues 53-57 (FIVQH), Tyr115, and Arg119. His242 is a binding site for heme. Thr256 is a binding site for substrate.

It belongs to the tryptophan 2,3-dioxygenase family. In terms of assembly, homotetramer. It depends on heme as a cofactor.

The catalysed reaction is L-tryptophan + O2 = N-formyl-L-kynurenine. It participates in amino-acid degradation; L-tryptophan degradation via kynurenine pathway; L-kynurenine from L-tryptophan: step 1/2. Its function is as follows. Heme-dependent dioxygenase that catalyzes the oxidative cleavage of the L-tryptophan (L-Trp) pyrrole ring and converts L-tryptophan to N-formyl-L-kynurenine. Catalyzes the oxidative cleavage of the indole moiety. The polypeptide is Tryptophan 2,3-dioxygenase (Kineococcus radiotolerans (strain ATCC BAA-149 / DSM 14245 / SRS30216)).